A 427-amino-acid chain; its full sequence is MPCPRLLAALFCSSGLFAASGDFCDSSLCLHGGTCLLNEDRTPPFYCLCPEGFTGLLCNETEHGPCFPNPCHNDAECQVTDDSHRGDVFIQYICKCPLGYVGIHCETTCTSPLGMQTGAIADSQISASSMHLGFMGLQRWAPELARLHQTGIVNAWTSGNYDKNPWIQVNLMRKMWVTGVVTQGASRAGSAEYLKTFKVAYSTDGRQFQFIQVAGRSGDKIFIGNVNNSGLKINLFDTPLETQYVRLVPIICHRGCTLRFELLGCELNGCTEPLGLKDNTIPNKQITASSYYKTWGLSAFSWFPYYARLDNQGKFNAWTAQTNSASEWLQIDLGSQKRVTGIITQGARDFGHIQYVAAYRVAYGDDGVTWTEYKDPGASESKIFPGNMDNNSHKKNIFETPFQARFVRIQPVAWHNRITLRVELLGC.

The first 18 residues, 1–18 (MPCPRLLAALFCSSGLFA), serve as a signal peptide directing secretion. EGF-like domains lie at 20–59 (SGDFCDSSLCLHGGTCLLNEDRTPPFYCLCPEGFTGLLCN) and 62–106 (EHGP…IHCE). Cystine bridges form between Cys-24-Cys-35, Cys-29-Cys-47, and Cys-49-Cys-58. The O-linked (Fuc...) serine; in PAS-6 glycan is linked to Ser-27. O-linked (Fuc...) threonine; in PAS-7 glycosylation occurs at Thr-34. Asn-59 is a glycosylation site (N-linked (GlcNAc...) (hybrid) asparagine; in PAS-6 and PAS-7). Intrachain disulfides connect Cys-66/Cys-77, Cys-71/Cys-94, Cys-96/Cys-105, Cys-109/Cys-265, Cys-252/Cys-256, and Cys-270/Cys-427. The short motif at 85–87 (RGD) is the Cell attachment site element. F5/8 type C domains lie at 109–265 (CTSP…LLGC) and 270–427 (CTEP…LLGC). Asn-227 carries an N-linked (GlcNAc...) (high mannose) asparagine; in PAS-6 glycan.

The two O-linked glycans consist of Gal, GlcNAc and Fuc, with probably Fuc as reducing terminal sugar. As to expression, milk and spermatozoan. Also present in epididymis, kidney, heart, lymphatic gland and spleen but not esophagus, small intestine, muscle and liver.

Its subcellular location is the membrane. It localises to the secreted. It is found in the cytoplasmic vesicle. The protein resides in the secretory vesicle. The protein localises to the acrosome membrane. Contributes to phagocytic removal of apoptotic cells in many tissues. Plays an important role in the maintenance of intestinal epithelial homeostasis and the promotion of mucosal healing. Promotes VEGF-dependent neovascularization. Specific ligand for the alpha-v/beta-3 and alpha-v/beta-5 receptors. Also binds to phosphatidylserine-enriched cell surfaces in a receptor-independent manner. Zona pellucida-binding protein which may play a role in gamete interaction. The protein is Lactadherin (MFGE8) of Bos taurus (Bovine).